Reading from the N-terminus, the 1358-residue chain is Xanthine dehydrogenase/oxidase (1358 aa).

Residues 8–95 (DELVFFVNGK…HVAVTTVEGI (88 aa)) form the 2Fe-2S ferredoxin-type domain. Positions 47, 52, 55, 77, 117, 120, 152, and 154 each coordinate [2Fe-2S] cluster. The 186-residue stretch at 255-440 (FKGERVMWIQ…LSVEIPYSKE (186 aa)) folds into the FAD-binding PCMH-type domain. Residues 283–290 (LVVGNTEV), F363, 373–377 (ALGGN), D386, L430, and K448 contribute to the FAD site. Mo-molybdopterin is bound by residues Q796 and F827. E831 and R909 together coordinate substrate. R941 serves as a coordination point for Mo-molybdopterin. The substrate site is built by F943 and T1039. Residue A1108 coordinates Mo-molybdopterin. E1290 functions as the Proton acceptor in the catalytic mechanism.

Belongs to the xanthine dehydrogenase family. As to quaternary structure, homodimer. FAD serves as cofactor. Requires Mo-molybdopterin as cofactor. It depends on [2Fe-2S] cluster as a cofactor. In terms of tissue distribution, detected in liver (at protein level).

It localises to the peroxisome. Its subcellular location is the cytoplasm. The enzyme catalyses xanthine + NAD(+) + H2O = urate + NADH + H(+). The catalysed reaction is hypoxanthine + NAD(+) + H2O = xanthine + NADH + H(+). It carries out the reaction xanthine + O2 + H2O = urate + H2O2. Key enzyme in purine degradation. Catalyzes the oxidation of hypoxanthine to xanthine. Catalyzes the oxidation of xanthine to uric acid. Contributes to the generation of reactive oxygen species. This is Xanthine dehydrogenase/oxidase (XDH) from Gallus gallus (Chicken).